A 419-amino-acid chain; its full sequence is L-rhamnose isomerase (419 aa).

The Mn(2+) site is built by His-262, Asp-294, and Asp-296.

It belongs to the rhamnose isomerase family. Homotetramer. Requires Mn(2+) as cofactor.

It localises to the cytoplasm. The catalysed reaction is L-rhamnopyranose = L-rhamnulose. Its pathway is carbohydrate degradation; L-rhamnose degradation; glycerone phosphate from L-rhamnose: step 1/3. Its function is as follows. Catalyzes the interconversion of L-rhamnose and L-rhamnulose. This Escherichia coli O6:H1 (strain CFT073 / ATCC 700928 / UPEC) protein is L-rhamnose isomerase.